Consider the following 500-residue polypeptide: NAD(P)H-quinone oxidoreductase chain 4, chloroplastic (500 aa).

14 consecutive transmembrane segments (helical) span residues 4 to 24, 37 to 57, 87 to 107, 113 to 130, 134 to 154, 167 to 187, 207 to 227, 242 to 262, 272 to 292, 305 to 325, 330 to 350, 386 to 406, 411 to 431, and 462 to 482; these read FPWL…IFFL, ICIC…HFQL, IGPI…AWPV, LFHF…GSFS, LLLF…LLSM, FILY…GIGL, IALE…KSPI, HYST…YGLV, AHSL…IYAA, IAYS…SITD, GAIL…FLAG, LALP…GIIT, FLMA…LTPI, and LFVS…PDFL.

The protein belongs to the complex I subunit 4 family.

Its subcellular location is the plastid. It is found in the chloroplast thylakoid membrane. The catalysed reaction is a plastoquinone + NADH + (n+1) H(+)(in) = a plastoquinol + NAD(+) + n H(+)(out). It carries out the reaction a plastoquinone + NADPH + (n+1) H(+)(in) = a plastoquinol + NADP(+) + n H(+)(out). The polypeptide is NAD(P)H-quinone oxidoreductase chain 4, chloroplastic (Carica papaya (Papaya)).